An 839-amino-acid polypeptide reads, in one-letter code: Small conductance calcium-activated potassium channel protein 2 (839 aa).

Disordered stretches follow at residues 1–33, 64–115, 195–258, and 280–375; these read MPIVLVRPTNRTRRLDSTGAGMGPSSHQQQESP, QRGF…QQPG, ALRQ…RRES, and SNLS…KKNQ. 2 stretches are compositionally biased toward low complexity: residues 198-212 and 219-235; these read QQYAQQPASASQYHQ and ATSPTGSLGSLGSGPPL. Basic residues predominate over residues 236–253; it reads SHHHHHPHPAHHQHHQPQ. Residues 313 to 326 show a composition bias toward low complexity; it reads SSPSAAAAASSSAP. A compositionally biased stretch (gly residues) spans 345 to 363; it reads GTGGGGSTGGGGGGSGHGS. The chain crosses the membrane as a helical span at residues 398 to 418; that stretch reads ALIFGMFGIVVMVIETELSWG. Position 420 is a phosphotyrosine (Y420). The helical transmembrane segment at 428–448 threads the bilayer; the sequence is LALKCLISLSTIILLGLIIVY. A helical transmembrane segment spans residues 474-494; the sequence is IFFICLEILVCAIHPIPGNYT. The helical transmembrane segment at 516–536 threads the bilayer; the sequence is IILSIPMFLRLYLIARVMLLH. Residues 565–585 traverse the membrane as a helical segment; it reads LMTICPGTVLLVFSISLWIIA. Residues 605–625 constitute an intramembrane region (pore-forming); that stretch reads FLGAMWLISITFLSIGYGDMV. Residues 634–654 traverse the membrane as a helical segment; that stretch reads VCLLTGIMGAGCTALVVAVVA. A calmodulin-binding region spans residues 672–748; it reads DTQLTKRVKN…LVDLAKTQNI (77 aa). Positions 810 to 819 are enriched in basic and acidic residues; the sequence is HVSYNAERSR. The tract at residues 810-839 is disordered; it reads HVSYNAERSRSSSRRRRSSSTAPPTSSESS. Residues 828 to 839 show a composition bias toward low complexity; the sequence is SSTAPPTSSESS.

This sequence belongs to the potassium channel KCNN family. KCa2.2/KCNN2 subfamily. As to quaternary structure, homodimer. Heteromultimer with KCNN1 and KCNN3. The complex is composed of 4 channel subunits each of which binds to a calmodulin subunit which regulates the channel activity through calcium-binding. Interacts (via N-terminal domain) with MPP2. As to expression, expressed in atrial and ventricular myocytes with higher levels in atrial myocytes (at protein level). Highly expressed in brain, liver and colon with low levels in kidney and testis. In colon, detected in smooth muscle cells.

It is found in the membrane. The protein localises to the cytoplasm. Its subcellular location is the myofibril. It localises to the sarcomere. The protein resides in the z line. It catalyses the reaction K(+)(in) = K(+)(out). Inhibited by bee venom neurotoxin apamin. Inhibited by UCL 1684 and tetraethylammonium (TEA). In terms of biological role, small conductance calcium-activated potassium channel that mediates the voltage-independent transmembrane transfer of potassium across the cell membrane through a constitutive interaction with calmodulin which binds the intracellular calcium allowing its opening. The current is characterized by a voltage-independent activation, an intracellular calcium concentration increase-dependent activation and a single-channel conductance of about 3 picosiemens. Also presents an inwardly rectifying current, thus reducing its already small outward conductance of potassium ions, which is particularly the case when the membrane potential displays positive values, above + 20 mV. The inward rectification could be due to a blockade of the outward current by intracellular divalent cations such as calcium and magnesium and could also be due to an intrinsic property of the channel pore, independent of intracellular divalent ions. There are three positively charged amino acids in the S6 transmembrane domain, close to the pore, that collectively control the conductance and rectification through an electrostatic mechanism. Additionally, electrostatic contributions from these residues also play an important role in determining the intrinsic open probability of the channel in the absence of calcium, affecting the apparent calcium affinity for activation. Forms an heteromeric complex with calmodulin, which is constitutively associated in a calcium-independent manner. Channel opening is triggered when calcium binds the calmodulin resulting in a rotary movement leading to the formation of the dimeric complex to open the gate. Plays a role in the repolarization phase of cardiac action potential. The protein is Small conductance calcium-activated potassium channel protein 2 of Mus musculus (Mouse).